A 178-amino-acid chain; its full sequence is Large ribosomal subunit protein uL6 (178 aa).

The protein belongs to the universal ribosomal protein uL6 family. Part of the 50S ribosomal subunit.

Its function is as follows. This protein binds to the 23S rRNA, and is important in its secondary structure. It is located near the subunit interface in the base of the L7/L12 stalk, and near the tRNA binding site of the peptidyltransferase center. This Frankia alni (strain DSM 45986 / CECT 9034 / ACN14a) protein is Large ribosomal subunit protein uL6.